Consider the following 359-residue polypeptide: 1-deoxy-D-xylulose 5-phosphate reductoisomerase (359 aa).

The NADPH site is built by threonine 7, glycine 8, serine 9, isoleucine 10, alanine 31, asparagine 33, and asparagine 111. Lysine 112 is a 1-deoxy-D-xylulose 5-phosphate binding site. Glutamate 113 contacts NADPH. A Mn(2+)-binding site is contributed by aspartate 131. Serine 132, glutamate 133, serine 155, and histidine 178 together coordinate 1-deoxy-D-xylulose 5-phosphate. Residue glutamate 133 participates in Mn(2+) binding. Glycine 184 provides a ligand contact to NADPH. 4 residues coordinate 1-deoxy-D-xylulose 5-phosphate: serine 191, asparagine 196, lysine 197, and glutamate 200. Residue glutamate 200 participates in Mn(2+) binding.

This sequence belongs to the DXR family. The cofactor is Mg(2+). Mn(2+) serves as cofactor.

The enzyme catalyses 2-C-methyl-D-erythritol 4-phosphate + NADP(+) = 1-deoxy-D-xylulose 5-phosphate + NADPH + H(+). It participates in isoprenoid biosynthesis; isopentenyl diphosphate biosynthesis via DXP pathway; isopentenyl diphosphate from 1-deoxy-D-xylulose 5-phosphate: step 1/6. Functionally, catalyzes the NADPH-dependent rearrangement and reduction of 1-deoxy-D-xylulose-5-phosphate (DXP) to 2-C-methyl-D-erythritol 4-phosphate (MEP). This chain is 1-deoxy-D-xylulose 5-phosphate reductoisomerase, found in Campylobacter hominis (strain ATCC BAA-381 / DSM 21671 / CCUG 45161 / LMG 19568 / NCTC 13146 / CH001A).